Consider the following 701-residue polypeptide: Putative pectinesterase/pectinesterase inhibitor 43 (701 aa).

A signal peptide spans 1 to 22 (MNKYVLLGVTALIMAMVICVEA). The segment at 42–195 (MITKTTVSII…QHLTSNGLAI (154 aa)) is pectinesterase inhibitor 43. Low complexity-rich tracts occupy residues 221–256 (GILG…VDSS) and 263–275 (SSSE…SSNN). The tract at residues 221–351 (GILGSGSSRD…DPLRKLNPLN (131 aa)) is disordered. An N-linked (GlcNAc...) asparagine glycan is attached at N267. Composition is skewed to polar residues over residues 276–287 (RPLDSSKNQQME) and 313–338 (QKST…SSEN). The segment at 391–688 (NVVVAKDGSG…FAPGNFLRGN (298 aa)) is pectinesterase 43. Substrate contacts are provided by T467 and Q497. D520 acts as the Proton donor; for pectinesterase activity in catalysis. Cysteines 534 and 554 form a disulfide. D541 (nucleophile; for pectinesterase activity) is an active-site residue. The substrate site is built by R609 and W611. N637 carries N-linked (GlcNAc...) asparagine glycosylation.

The protein in the N-terminal section; belongs to the PMEI family. In the C-terminal section; belongs to the pectinesterase family. Expressed in flower buds.

The protein localises to the secreted. Its subcellular location is the cell wall. It catalyses the reaction [(1-&gt;4)-alpha-D-galacturonosyl methyl ester](n) + n H2O = [(1-&gt;4)-alpha-D-galacturonosyl](n) + n methanol + n H(+). It functions in the pathway glycan metabolism; pectin degradation; 2-dehydro-3-deoxy-D-gluconate from pectin: step 1/5. In terms of biological role, acts in the modification of cell walls via demethylesterification of cell wall pectin. The polypeptide is Putative pectinesterase/pectinesterase inhibitor 43 (PME43) (Arabidopsis thaliana (Mouse-ear cress)).